A 323-amino-acid chain; its full sequence is tRNA N6-adenosine threonylcarbamoyltransferase (323 aa).

Residues His-106, His-110, and Tyr-127 each coordinate Fe cation. Residues 127–131 (YVSGA), Asp-159, Gly-172, Glu-176, and Asn-255 contribute to the substrate site. A Fe cation-binding site is contributed by Asp-283.

The protein belongs to the KAE1 / TsaD family. In terms of assembly, monomer. Component of the KEOPS complex that consists of Kae1, Bud32, Cgi121 and Pcc1; the whole complex dimerizes. Fe(2+) serves as cofactor.

The protein localises to the cytoplasm. It carries out the reaction L-threonylcarbamoyladenylate + adenosine(37) in tRNA = N(6)-L-threonylcarbamoyladenosine(37) in tRNA + AMP + H(+). Its function is as follows. Required for the formation of a threonylcarbamoyl group on adenosine at position 37 (t(6)A37) in tRNAs that read codons beginning with adenine. Is a component of the KEOPS complex that is probably involved in the transfer of the threonylcarbamoyl moiety of threonylcarbamoyl-AMP (TC-AMP) to the N6 group of A37. Kae1 likely plays a direct catalytic role in this reaction, but requires other protein(s) of the complex to fulfill this activity. The polypeptide is tRNA N6-adenosine threonylcarbamoyltransferase (Methanocella arvoryzae (strain DSM 22066 / NBRC 105507 / MRE50)).